The primary structure comprises 233 residues: 2-C-methyl-D-erythritol 4-phosphate cytidylyltransferase (233 aa).

It belongs to the IspD/TarI cytidylyltransferase family. IspD subfamily.

It catalyses the reaction 2-C-methyl-D-erythritol 4-phosphate + CTP + H(+) = 4-CDP-2-C-methyl-D-erythritol + diphosphate. It functions in the pathway isoprenoid biosynthesis; isopentenyl diphosphate biosynthesis via DXP pathway; isopentenyl diphosphate from 1-deoxy-D-xylulose 5-phosphate: step 2/6. In terms of biological role, catalyzes the formation of 4-diphosphocytidyl-2-C-methyl-D-erythritol from CTP and 2-C-methyl-D-erythritol 4-phosphate (MEP). This Aromatoleum aromaticum (strain DSM 19018 / LMG 30748 / EbN1) (Azoarcus sp. (strain EbN1)) protein is 2-C-methyl-D-erythritol 4-phosphate cytidylyltransferase.